Reading from the N-terminus, the 75-residue chain is Small ribosomal subunit protein bS16c (75 aa).

Belongs to the bacterial ribosomal protein bS16 family.

It is found in the plastid. The protein resides in the chloroplast. This is Small ribosomal subunit protein bS16c from Cyanidium caldarium (Red alga).